The following is a 603-amino-acid chain: Chaperone protein DnaK (603 aa).

Threonine 175 carries the phosphothreonine; by autocatalysis modification. Over residues 573–586 the composition is skewed to low complexity; sequence AQQAQQQNPDNQNN. The interval 573 to 603 is disordered; that stretch reads AQQAQQQNPDNQNNNKDDVTEATVTDDSTKK. Positions 594–603 are enriched in polar residues; it reads ATVTDDSTKK.

The protein belongs to the heat shock protein 70 family.

Its function is as follows. Acts as a chaperone. The sequence is that of Chaperone protein DnaK from Ureaplasma parvum serovar 3 (strain ATCC 27815 / 27 / NCTC 11736).